The sequence spans 96 residues: Small ribosomal subunit protein bS21 (96 aa).

The segment at Arg-52–Ala-96 is disordered. The segment covering Ala-69–Ala-96 has biased composition (low complexity).

The protein belongs to the bacterial ribosomal protein bS21 family.

The polypeptide is Small ribosomal subunit protein bS21 (Methylobacterium nodulans (strain LMG 21967 / CNCM I-2342 / ORS 2060)).